The chain runs to 296 residues: NAD kinase (296 aa).

The active-site Proton acceptor is Asp72. Residues Asp72–Gly73, Asn146–Asp147, Arg157, Lys174, Asp176, Thr187–Ser192, and Gln247 each bind NAD(+).

The protein belongs to the NAD kinase family. A divalent metal cation serves as cofactor.

The protein localises to the cytoplasm. It carries out the reaction NAD(+) + ATP = ADP + NADP(+) + H(+). Its function is as follows. Involved in the regulation of the intracellular balance of NAD and NADP, and is a key enzyme in the biosynthesis of NADP. Catalyzes specifically the phosphorylation on 2'-hydroxyl of the adenosine moiety of NAD to yield NADP. This chain is NAD kinase, found in Pseudomonas savastanoi pv. phaseolicola (strain 1448A / Race 6) (Pseudomonas syringae pv. phaseolicola (strain 1448A / Race 6)).